The following is a 511-amino-acid chain: Bifunctional purine biosynthesis protein PurH (511 aa).

In terms of domain architecture, MGS-like spans 1 to 145; the sequence is MKKRALVSVS…KNHKFVSVIV (145 aa).

The protein belongs to the PurH family.

The enzyme catalyses (6R)-10-formyltetrahydrofolate + 5-amino-1-(5-phospho-beta-D-ribosyl)imidazole-4-carboxamide = 5-formamido-1-(5-phospho-D-ribosyl)imidazole-4-carboxamide + (6S)-5,6,7,8-tetrahydrofolate. It carries out the reaction IMP + H2O = 5-formamido-1-(5-phospho-D-ribosyl)imidazole-4-carboxamide. The protein operates within purine metabolism; IMP biosynthesis via de novo pathway; 5-formamido-1-(5-phospho-D-ribosyl)imidazole-4-carboxamide from 5-amino-1-(5-phospho-D-ribosyl)imidazole-4-carboxamide (10-formyl THF route): step 1/1. It participates in purine metabolism; IMP biosynthesis via de novo pathway; IMP from 5-formamido-1-(5-phospho-D-ribosyl)imidazole-4-carboxamide: step 1/1. This chain is Bifunctional purine biosynthesis protein PurH, found in Bacillus cytotoxicus (strain DSM 22905 / CIP 110041 / 391-98 / NVH 391-98).